The following is a 450-amino-acid chain: Ammonium transporter Rh type A (450 aa).

Residues 1–4 (MRFK) are Cytoplasmic-facing. The chain crosses the membrane as a helical span at residues 5–25 (FSLIALSLEVVMIVSFALFVE). Topologically, residues 26–72 (YETSQNGSQKSASQQNASQQNAAAQQNASQQGNASSPAKEDQFFQLY) are extracellular. N-linked (GlcNAc...) asparagine glycosylation is found at Asn31, Asn41, Asn52, and Asn58. The segment at 34-61 (QKSASQQNASQQNAAAQQNASQQGNASS) is disordered. The chain crosses the membrane as a helical span at residues 73 to 93 (PLFQHVHVMIFVGFGFLMTFL). The Cytoplasmic portion of the chain corresponds to 94 to 97 (KKYG). Residues 98-118 (FSGVGFNLFLAALGLQWGTIV) traverse the membrane as a helical segment. Over 119 to 134 (QGLLHSHGLKFPFRIK) the chain is Extracellular. A helical transmembrane segment spans residues 135–155 (NMINADFSTATVLISFGAVLG). Over 156-159 (KTSP) the chain is Cytoplasmic. The helical transmembrane segment at 160 to 180 (IQMIIMTILEIAVFAGNEHLV) threads the bilayer. Residues 181–189 (TEIFKASDT) are Extracellular-facing. A helical membrane pass occupies residues 190–210 (GASMTIHAFGAYFGLAVAGVL). The Cytoplasmic segment spans residues 211-229 (YRSGLKHGHPNEESVYHSD). A helical transmembrane segment spans residues 230 to 250 (LFAMIGTLFLWMFWPSFNSAI). Over 251-260 (AQPENNQYRA) the chain is Extracellular. A helical membrane pass occupies residues 261–281 (IVNTYMSLAACVITAYALSSL). The Cytoplasmic segment spans residues 282–289 (VERRGRLD). A helical membrane pass occupies residues 290 to 307 (MVHIQNATLAGGVAVGTC). Residues 308–311 (ADME) are Extracellular-facing. A helical transmembrane segment spans residues 312–332 (IPLYFAMTIGSIAGIISVLGY). Residues 333 to 349 (KFLSPLLAHKLMIHDTC) are Cytoplasmic-facing. Residues 350–370 (GVHNLHGLPGVFGGLASIVAI) traverse the membrane as a helical segment. The Extracellular segment spans residues 371–384 (SWGKSTVSTMAMQA). The helical transmembrane segment at 385-405 (TALGSSIGSAIVGGLVTGLIL) threads the bilayer. Residues 406–450 (KLPVWNQPPDEYCFDDSVSWKVPKYRELDNYFFQHVTHNHVEHEV) are Cytoplasmic-facing.

The protein belongs to the ammonium transporter (TC 2.A.49) family. Rh subfamily. Homodimer. Heterotrimer; a RHCE monomer interacts with a RHAG homodimer. Component of the ankyrin-1 complex in the erythrocyte, composed of ANK1, RHCE, RHAG, SLC4A1, EPB42, GYPA, GYPB and AQP1. Interacts with GYPB (via the N-terminal); this interaction bridges the (RHAG)2(RHCE) heterotrimer with the SLC4A1 Band 3 I dimer complexed with GYPA. Glycosylated.

The protein resides in the membrane. The catalysed reaction is methylamine(out) = methylamine(in). The enzyme catalyses NH4(+)(in) = NH4(+)(out). It carries out the reaction CO2(out) = CO2(in). Component of the ankyrin-1 complex, a multiprotein complex involved in the stability and shape of the erythrocyte membrane. Heterotrimer with RHCE (RHAG)2(RHCE), that transports ammonium and its related derivative methylammonium, in both neutral and ionic forms, across the erythrocyte membrane. The transport of NH4(+) is electrogenic and masks the NH3 transport. Also, may act as a CO2 channel. Moreover in erythrocyte, regulates RHD membrane expression and is associated with rhesus blood group antigen expression. The protein is Ammonium transporter Rh type A of Rattus norvegicus (Rat).